The following is a 294-amino-acid chain: Golgi phosphoprotein 3 homolog sauron (294 aa).

Residues 1–52 (MNRSDGLVRRSVKPRENGGAEGGLNANTPDDNQDALDNLKDQEDNIDDGDSK) form a disordered region. Positions 37–52 (DNLKDQEDNIDDGDSK) are enriched in basic and acidic residues. A 1,2-diacyl-sn-glycero-3-phospho-(1D-myo-inositol 4-phosphate)-binding residues include W77, R86, K167, and R170. The segment at 186 to 197 (EKQNFLLFDMTT) is beta-hairpin required for oligomerization.

This sequence belongs to the GOLPH3/VPS74 family. In terms of assembly, homooligomer. Interacts with botv, Ext2 and ttv. Interacts with Vti1. Interacts with Vps35, Rab5, Chc, Rab11, zip, Pav and Septin1.

The protein localises to the golgi apparatus membrane. It is found in the cytoplasmic vesicle. It localises to the cleavage furrow. In terms of biological role, phosphatidylinositol-4-phosphate-binding protein that links Golgi membranes to the cytoskeleton and may participate in the tensile force required for vesicle budding from the Golgi. Thereby, may play a role in Golgi membrane trafficking and could indirectly give its flattened shape to the Golgi apparatus. May also bind to the coatomer to regulate Golgi membrane trafficking. May play a role in anterograde transport from the Golgi to the plasma membrane and regulate secretion. Also involved in the control of the localization of Golgi enzymes through interaction with their cytoplasmic part. Functions in cytokinesis by regulating contractile ring formation and vesicle trafficking during cleavage furrow ingression. May also have a role in the intital steps of central spindle formation. Can also bind phosphatidylinositol-3-phosphate and phosphatidylinositol-5-phosphate in vitro. The sequence is that of Golgi phosphoprotein 3 homolog sauron from Drosophila melanogaster (Fruit fly).